Consider the following 826-residue polypeptide: Leucine--tRNA ligase (826 aa).

The 'HIGH' region signature appears at 42–52; that stretch reads PYPSGNLHMGH. Residues 581 to 585 carry the 'KMSKS' region motif; sequence KMSKS. Residue K584 coordinates ATP.

This sequence belongs to the class-I aminoacyl-tRNA synthetase family.

It is found in the cytoplasm. The enzyme catalyses tRNA(Leu) + L-leucine + ATP = L-leucyl-tRNA(Leu) + AMP + diphosphate. This Desulforudis audaxviator (strain MP104C) protein is Leucine--tRNA ligase.